The primary structure comprises 248 residues: 23S rRNA (guanosine-2'-O-)-methyltransferase RlmB (248 aa).

G198, L218, and L227 together coordinate S-adenosyl-L-methionine.

This sequence belongs to the class IV-like SAM-binding methyltransferase superfamily. RNA methyltransferase TrmH family. RlmB subfamily.

It localises to the cytoplasm. The enzyme catalyses guanosine(2251) in 23S rRNA + S-adenosyl-L-methionine = 2'-O-methylguanosine(2251) in 23S rRNA + S-adenosyl-L-homocysteine + H(+). Functionally, specifically methylates the ribose of guanosine 2251 in 23S rRNA. The chain is 23S rRNA (guanosine-2'-O-)-methyltransferase RlmB from Pseudomonas putida (strain ATCC 47054 / DSM 6125 / CFBP 8728 / NCIMB 11950 / KT2440).